A 274-amino-acid chain; its full sequence is Shikimate dehydrogenase (NADP(+)) (274 aa).

Shikimate contacts are provided by residues 14–16 (SKS) and Thr-60. The active-site Proton acceptor is the Lys-64. Residue Glu-76 participates in NADP(+) binding. Shikimate contacts are provided by Asn-85 and Asp-101. Residues 126 to 130 (GAGGA), 150 to 155 (NRTAEK), and Met-214 contribute to the NADP(+) site. Shikimate is bound at residue Tyr-216. NADP(+) is bound at residue Gly-238.

Belongs to the shikimate dehydrogenase family. As to quaternary structure, homodimer.

The enzyme catalyses shikimate + NADP(+) = 3-dehydroshikimate + NADPH + H(+). It functions in the pathway metabolic intermediate biosynthesis; chorismate biosynthesis; chorismate from D-erythrose 4-phosphate and phosphoenolpyruvate: step 4/7. In terms of biological role, involved in the biosynthesis of the chorismate, which leads to the biosynthesis of aromatic amino acids. Catalyzes the reversible NADPH linked reduction of 3-dehydroshikimate (DHSA) to yield shikimate (SA). This is Shikimate dehydrogenase (NADP(+)) from Pseudomonas paraeruginosa (strain DSM 24068 / PA7) (Pseudomonas aeruginosa (strain PA7)).